A 126-amino-acid chain; its full sequence is Large ribosomal subunit protein bL12 (126 aa).

This sequence belongs to the bacterial ribosomal protein bL12 family. As to quaternary structure, homodimer. Part of the ribosomal stalk of the 50S ribosomal subunit. Forms a multimeric L10(L12)X complex, where L10 forms an elongated spine to which 2 to 4 L12 dimers bind in a sequential fashion. Binds GTP-bound translation factors.

Functionally, forms part of the ribosomal stalk which helps the ribosome interact with GTP-bound translation factors. Is thus essential for accurate translation. In Solibacter usitatus (strain Ellin6076), this protein is Large ribosomal subunit protein bL12.